The primary structure comprises 172 residues: C-phycocyanin-2 beta subunit (172 aa).

N72 is subject to N4-methylasparagine. (2R,3E)-phycocyanobilin contacts are provided by C82 and C153.

It belongs to the phycobiliprotein family. Heterodimer of an alpha and a beta subunit, which further assembles into trimers and the trimers into hexamers. In terms of processing, contains two covalently linked bilin chromophores.

The protein resides in the cellular thylakoid membrane. Light-harvesting photosynthetic bile pigment-protein from the phycobiliprotein complex (phycobilisome, PBS). Phycocyanin is the major phycobiliprotein in the PBS rod. The chain is C-phycocyanin-2 beta subunit (cpcB2) from Microchaete diplosiphon (Fremyella diplosiphon).